A 150-amino-acid polypeptide reads, in one-letter code: uncharacterized protein (150 aa).

The Rhodanese domain maps to 19-93 (GAQDYVLVDV…SSKRLALRES (75 aa)).

This is an uncharacterized protein from Synechococcus elongatus.